The chain runs to 526 residues: Nitrogenase iron-iron protein alpha chain (526 aa).

[8Fe-7S] cluster is bound by residues Cys-49, Cys-75, and Cys-138. Cys-257 and His-423 together coordinate [8Fe-9S-C-homocitryl] cluster. Residues 507 to 526 (RNQPMPPSRKLRDAVQPAAE) are disordered.

This sequence belongs to the NifD/NifK/NifE/NifN family. As to quaternary structure, hexamer of two alpha, two beta, and two delta chains. [8Fe-7S] cluster is required as a cofactor. The cofactor is [8Fe-9S-C-homocitryl] cluster.

It carries out the reaction N2 + 8 reduced [2Fe-2S]-[ferredoxin] + 16 ATP + 16 H2O = H2 + 8 oxidized [2Fe-2S]-[ferredoxin] + 2 NH4(+) + 16 ADP + 16 phosphate + 6 H(+). Functionally, this iron-iron protein is part of the nitrogenase complex that catalyzes the key enzymatic reactions in nitrogen fixation. Other nitrogenase complexes utilize a molybdenum-iron protein or a vanadium-iron protein. The sequence is that of Nitrogenase iron-iron protein alpha chain (anfD) from Rhodobacter capsulatus (Rhodopseudomonas capsulata).